We begin with the raw amino-acid sequence, 1182 residues long: Lysine-specific demethylase hairless (1182 aa).

Disordered stretches follow at residues 227–257 (LGLA…GAGR), 302–380 (YQLG…KKTW), 411–443 (AGSP…ARAW), and 507–546 (TGHS…ASLN). Positions 307–321 (PATPRCPSPGPPTPP) are enriched in pro residues. An LXXLL motif 1 motif is present at residues 561-565 (LCRLL). A C6-type zinc finger spans residues 595 to 620 (CSRCHHGLFNTHWRCSHCSHRLCVAC). Positions 697-746 (GDGGQQKEPTEKTPPTPQPSCNGDSNRTKDIKEETPDSTESPAEDGAGRS) are disordered. Basic and acidic residues predominate over residues 722–731 (NRTKDIKEET). The LXXLL motif 2 motif lies at 753 to 757 (LCELL). The JmjC domain maps to 939–1150 (DASRVQNLAS…LSAQLYHQGA (212 aa)). Fe cation-binding residues include Cys-1000, Glu-1002, and His-1118.

Fe(2+) is required as a cofactor. Expressed predominantly in brain, hair follicles and interfollicular epidermis. No expression in dermis.

The protein resides in the nucleus. The enzyme catalyses N(6),N(6)-dimethyl-L-lysyl(9)-[histone H3] + 2 2-oxoglutarate + 2 O2 = L-lysyl(9)-[histone H3] + 2 formaldehyde + 2 succinate + 2 CO2. Its function is as follows. Histone demethylase that specifically demethylates both mono- and dimethylated 'Lys-9' of histone H3. May act as a transcription regulator controlling hair biology (via targeting of collagens), neural activity, and cell cycle. The chain is Lysine-specific demethylase hairless (Hr) from Mus musculus (Mouse).